Consider the following 153-residue polypeptide: Probable histone H2A.2 (153 aa).

2 disordered regions span residues 1–24 and 127–153; these read MDASTKTKKGAGGRKGGGPRKKSV and KKTERSNTVSKEPKSPKPKAGKSPKKA. Positions 127–141 are enriched in basic and acidic residues; that stretch reads KKTERSNTVSKEPKS. A compositionally biased stretch (basic residues) spans 142 to 153; it reads PKPKAGKSPKKA. An SPKK motif motif is present at residues 149 to 152; it reads SPKK.

Belongs to the histone H2A family. The nucleosome is a histone octamer containing two molecules each of H2A, H2B, H3 and H4 assembled in one H3-H4 heterotetramer and two H2A-H2B heterodimers. The octamer wraps approximately 147 bp of DNA.

It is found in the nucleus. It localises to the chromosome. Functionally, core component of nucleosome. Nucleosomes wrap and compact DNA into chromatin, limiting DNA accessibility to the cellular machineries which require DNA as a template. Histones thereby play a central role in transcription regulation, DNA repair, DNA replication and chromosomal stability. DNA accessibility is regulated via a complex set of post-translational modifications of histones, also called histone code, and nucleosome remodeling. The polypeptide is Probable histone H2A.2 (Medicago truncatula (Barrel medic)).